The chain runs to 475 residues: Aspartic proteinase 39 (475 aa).

The signal sequence occupies residues 1–23 (MELRRKLCIVVAVFVIVIEFASA). A Peptidase A1 domain is found at 74–422 (YFTKIKLGSP…DLDNEVIGWA (349 aa)). Aspartate 92 is an active-site residue. Asparagine 124 and asparagine 222 each carry an N-linked (GlcNAc...) asparagine glycan. The active site involves aspartate 303. 2 N-linked (GlcNAc...) asparagine glycosylation sites follow: asparagine 425 and asparagine 446. Serine 449 carries GPI-anchor amidated serine lipidation. A propeptide spans 450–475 (APRLLMITKLLTILSPLIVMAFTSLA) (removed in mature form).

It belongs to the peptidase A1 family. In terms of tissue distribution, highly expressed in pollen and pollen tubes. Mostly expressed in inflorescence, flowers and siliques, and barely in leaves and seedlings.

It localises to the cell membrane. It is found in the cytoplasm. The protein localises to the cytosol. Its function is as follows. Displays aspartic proteolytic activity. Together with A36, contributes to pollen and ovule development, including the apical cell wall constitution of the growing pollen tubes. The chain is Aspartic proteinase 39 from Arabidopsis thaliana (Mouse-ear cress).